The chain runs to 334 residues: Sterol 4-C-methyltransferase strm-1 (334 aa).

It belongs to the class I-like SAM-binding methyltransferase superfamily. Erg6/SMT family. In terms of tissue distribution, expressed in the pharynx and hypodermal syncytium.

It catalyses the reaction 5alpha-cholest-7-en-3-one + S-adenosyl-L-methionine = 4alpha-methyl-5alpha-cholest-7-en-3-one + S-adenosyl-L-homocysteine + H(+). It participates in steroid hormone biosynthesis; dafachronic acid biosynthesis. Catalyzes the methyl transfer from S-adenosyl-methionine to the C-4 of the A-ring sterols such as lathosterone (5alpha-cholest-7-en-3-one) thereby rendering them unsuitable as ligand precursors. May irreversibly shunt sterols away from hormone dafachronic acid production. Dafachronic acids act as ligands and bind directly to the nuclear hormone receptor (NHR) daf-12 suppressing dauer formation and inducing reproductive growth. By reducing the biosynthesis of dafachronic acids, this methyltransferase can regulate dauer larva formation. The polypeptide is Sterol 4-C-methyltransferase strm-1 (strm-1) (Caenorhabditis elegans).